A 185-amino-acid chain; its full sequence is Large ribosomal subunit protein bL25 (185 aa).

The protein belongs to the bacterial ribosomal protein bL25 family. CTC subfamily. In terms of assembly, part of the 50S ribosomal subunit; part of the 5S rRNA/L5/L18/L25 subcomplex. Contacts the 5S rRNA. Binds to the 5S rRNA independently of L5 and L18.

In terms of biological role, this is one of the proteins that binds to the 5S RNA in the ribosome where it forms part of the central protuberance. This is Large ribosomal subunit protein bL25 from Chlamydia abortus (strain DSM 27085 / S26/3) (Chlamydophila abortus).